We begin with the raw amino-acid sequence, 284 residues long: MNLAGFEVGLDKPFFLIAGTCVVESEQMTIDTAGRLKEICATLGVPFIYKSSYDKANRSSGKSFRGLGMDEGLRILAEVKRQLNVPVLTDVHEIDEIAPVAAVVDVLQTPAFLCRQTDFIRACAQSGKPVNIKKGQFLAPHDMKNVIDKARDAARDAGLSEDRFMACERGVSFGYNNLVSDMRSLAIMRETGAPVVFDATHSVQLPGGQGTSSGGQREFVPVLARAALATGVAGLFMETHPNPAEAKSDGPNAVPLGRMAALLETLVTLDRAVKRVPFLENDFN.

This sequence belongs to the KdsA family.

It is found in the cytoplasm. The enzyme catalyses D-arabinose 5-phosphate + phosphoenolpyruvate + H2O = 3-deoxy-alpha-D-manno-2-octulosonate-8-phosphate + phosphate. Its pathway is carbohydrate biosynthesis; 3-deoxy-D-manno-octulosonate biosynthesis; 3-deoxy-D-manno-octulosonate from D-ribulose 5-phosphate: step 2/3. It participates in bacterial outer membrane biogenesis; lipopolysaccharide biosynthesis. The sequence is that of 2-dehydro-3-deoxyphosphooctonate aldolase from Burkholderia mallei (strain NCTC 10247).